The sequence spans 300 residues: Cation-efflux pump FieF (300 aa).

Transmembrane regions (helical) follow at residues 12-32 (AALS…FAWW), 40-60 (LAAL…LFVV), 82-102 (AALA…LTGF), and 114-134 (PGLG…LVTF). Zn(2+) contacts are provided by Asp45 and Asp49. Residues His153 and Asp157 each coordinate Zn(2+). Residues 164–184 (ILIALALSWYGFHRADALFAL) form a helical membrane-spanning segment.

The protein belongs to the cation diffusion facilitator (CDF) transporter (TC 2.A.4) family. FieF subfamily. As to quaternary structure, homodimer.

Its subcellular location is the cell inner membrane. It catalyses the reaction Zn(2+)(in) + H(+)(out) = Zn(2+)(out) + H(+)(in). The catalysed reaction is Cd(2+)(in) + H(+)(out) = Cd(2+)(out) + H(+)(in). The enzyme catalyses Fe(2+)(in) + H(+)(out) = Fe(2+)(out) + H(+)(in). In terms of biological role, divalent metal cation transporter which exports Zn(2+), Cd(2+) and possibly Fe(2+). May be involved in zinc and iron detoxification by efflux. This is Cation-efflux pump FieF from Yersinia enterocolitica serotype O:8 / biotype 1B (strain NCTC 13174 / 8081).